The primary structure comprises 587 residues: Inorganic phosphate transporter PHO84 (587 aa).

Topologically, residues 1 to 67 (MSSVNKDTIH…FGWQQVKTIS (67 aa)) are extracellular. Residue K6 forms a Glycyl lysine isopeptide (Lys-Gly) (interchain with G-Cter in ubiquitin) linkage. The helical transmembrane segment at 68-88 (IAGVGFLTDSYDIFAINLGIT) threads the bilayer. The Cytoplasmic portion of the chain corresponds to 89-108 (MMSYVYWHGSMPGPSQTLLK). The helical transmembrane segment at 109 to 129 (VSTSVGTVIGQFGFGTLADIV) threads the bilayer. At 130–133 (GRKR) the chain is on the extracellular side. Residues 134–154 (IYGMELIIMIVCTILQTTVAH) traverse the membrane as a helical segment. Residues 155–156 (SP) are Cytoplasmic-facing. The helical transmembrane segment at 157–177 (AINFVAVLTFYRIVMGIGIGG) threads the bilayer. At 178 to 201 (DYPLSSIITSEFATTKWRGAIMGA) the chain is on the extracellular side. The chain crosses the membrane as a helical span at residues 202 to 222 (VFANQAWGQISGGIIALILVA). The Cytoplasmic segment spans residues 223 to 250 (AYKGELEYANSGAECDARCQKACDQMWR). A helical transmembrane segment spans residues 251–271 (ILIGLGTVLGLACLYFRLTIP). Residues 272-345 (ESPRYQLDVN…RHFGQWKYGK (74 aa)) lie on the Extracellular side of the membrane. K298 is covalently cross-linked (Glycyl lysine isopeptide (Lys-Gly) (interchain with G-Cter in ubiquitin)). T302 carries the phosphothreonine modification. S303 and S316 each carry phosphoserine. Residue T317 is modified to Phosphothreonine. S321 is modified (phosphoserine). A helical membrane pass occupies residues 346-366 (ILLGTAGSWFTLDVAFYGLSL). Over 367–395 (NSAVILQTIGYAGSKNVYKKLYDTAVGNL) the chain is Cytoplasmic. The helical transmembrane segment at 396–416 (ILICAGSLPGYWVSVFTVDII) threads the bilayer. Topologically, residues 417–419 (GRK) are extracellular. A helical membrane pass occupies residues 420 to 440 (PIQLAGFIILTALFCVIGFAY). At 441-442 (HK) the chain is on the cytoplasmic side. A helical membrane pass occupies residues 443-463 (LGDHGLLALYVICQFFQNFGP). The Extracellular segment spans residues 464 to 485 (NTTTFIVPGECFPTRYRSTAHG). Residues 486-506 (ISAASGKVGAIIAQTALGTLI) traverse the membrane as a helical segment. Topologically, residues 507–522 (DHNCARDGKPTNCWLP) are cytoplasmic. The helical transmembrane segment at 523–543 (HVMEIFALFMLLGIFTTLLIP) threads the bilayer. At 544 to 587 (ETKRKTLEEINELYHDEIDPATLNFRNKNNDIESSSPSQLQHEA) the chain is on the extracellular side. The interval 568-587 (FRNKNNDIESSSPSQLQHEA) is disordered. S577, S579, and S581 each carry phosphoserine.

This sequence belongs to the major facilitator superfamily. Phosphate:H(+) symporter (TC 2.A.1.9) family. In terms of assembly, may function as a monomer. Phosphorylated; phosphorylation increases after phosphate addition to the growth medium. Post-translationally, ubiquitinated in a phosphate-dependent manner; ubiquitination may influence the trafficking of PHO84 to the cell membrane and serve as a signal for endocytosis and internalization.

Its subcellular location is the cell membrane. The protein resides in the vacuole. The catalysed reaction is phosphate(in) + H(+)(in) = phosphate(out) + H(+)(out). It catalyses the reaction Mn(2+)(in) = Mn(2+)(out). The enzyme catalyses Zn(2+)(in) = Zn(2+)(out). It carries out the reaction Cu(2+)(in) = Cu(2+)(out). The catalysed reaction is Co(2+)(in) = Co(2+)(out). With respect to regulation, transport activity is inhibited in the presence of the protonophore carbonylcyanide m-chlorophenylhydrazone. Transport activity is inhibited by glycerol-3-phosphate. Transport activity is inhibited by phosphonoacetic acid. Signaling activity is stimulated by glycerol-3-phosphate which acts as a nontransported PHO84 agonist that can trigger PKA signaling. Signaling activity is stimulated by arsenate. In terms of biological role, proton-coupled high-affinity transporter for external inorganic phosphate. Acts as a transceptor, a membrane protein that in addition to its transporter activity also possesses receptor-like signaling activity; mediates activation of the protein kinase A (PKA) pathway targets during growth induction, triggered by phosphate addition to cells growth-arrested due to previous phosphate starvation. Is not an essential protein, since constitutive, low affinity phosphate transporters exist in yeast. Can function as a low affinity metal transporter that transports manganese, zinc, cobalt and copper. Plays a role in manganese homeostasis predominantly under manganese surplus conditions. The polypeptide is Inorganic phosphate transporter PHO84 (PHO84) (Saccharomyces cerevisiae (strain ATCC 204508 / S288c) (Baker's yeast)).